The following is a 441-amino-acid chain: Protein C-ets-1 (441 aa).

Lys8 and Lys15 each carry N6-acetyllysine; alternate. Glycyl lysine isopeptide (Lys-Gly) (interchain with G-Cter in SUMO2); alternate cross-links involve residues Lys8 and Lys15. Lys15 is covalently cross-linked (Glycyl lysine isopeptide (Lys-Gly) (interchain with G-Cter in SUMO); alternate). At Thr38 the chain carries Phosphothreonine; by MAPK. The region spanning 51 to 136 is the PNT domain; the sequence is ATFSGFTKEQ…EHLEILQKED (86 aa). Residues 130 to 243 form an activation domain; required for transcription activation region; the sequence is EILQKEDVKP…DNMCMGRASR (114 aa). Lys138 is covalently cross-linked (Glycyl lysine isopeptide (Lys-Gly) (interchain with G-Cter in SUMO2)). Residue Tyr223 is modified to Phosphotyrosine. Lys227 participates in a covalent cross-link: Glycyl lysine isopeptide (Lys-Gly) (interchain with G-Cter in SUMO). Ser251 and Ser254 each carry phosphoserine. Thr265 carries the post-translational modification Phosphothreonine. Phosphoserine is present on residues Ser267, Ser270, Ser282, and Ser285. A helix HI-1 region spans residues 304–312; that stretch reads FKDYVRDRA. Lys305 is modified (N6-acetyllysine). Residues 323 to 330 form a helix HI-2 region; sequence AAALAGYT. Positions 335–415 form a DNA-binding region, ETS; that stretch reads IQLWQFLLEL…AGKRYVYRFV (81 aa). Residues 418–422 are helix H4; the sequence is LQSLL. Residues 426–432 form a helix H5 region; the sequence is PEELHAM.

This sequence belongs to the ETS family. As to quaternary structure, binds DNA as a homodimer; homodimerization is required for transcription activation. Interacts with MAF and MAFB. Interacts with PAX5; the interaction alters DNA-binding properties. Interacts with DAXX. Interacts with UBE2I. Interacts with SP100; the interaction is direct and modulates ETS1 transcriptional activity. Post-translationally, sumoylated on Lys-15 and Lys-227, preferentially with SUMO2; which inhibits transcriptional activity. Ubiquitinated; which induces proteasomal degradation. In terms of processing, phosphorylation at Ser-251, Ser-282 and Ser-285 by CaMK2/CaMKII in response to calcium signaling decreases affinity for DNA: an increasing number of phosphoserines causes DNA-binding to become progressively weaker.

The protein localises to the nucleus. It localises to the cytoplasm. Its activity is regulated as follows. Autoinhibited by a module composed of four alpha helices (HI-1, HI-2, H4, and H5) that flank the DNA-binding ETS domain, reducing the affinity for DNA. Phosphorylation by CaMK2/CaMKII in response to calcium signaling decreases affinity for DNA. Functionally, transcription factor. Directly controls the expression of cytokine and chemokine genes in a wide variety of different cellular contexts. May control the differentiation, survival and proliferation of lymphoid cells. May also regulate angiogenesis through regulation of expression of genes controlling endothelial cell migration and invasion. This Rattus norvegicus (Rat) protein is Protein C-ets-1 (Ets1).